The primary structure comprises 395 residues: ATP synthase subunit a (395 aa).

A run of 5 helical transmembrane segments spans residues 153–173 (FTNPSLFMLLTLSLVLLLVYF), 246–266 (HFLITLGLSFSIFIGITIVGF), 273–293 (FLSFLLPAGVPLPLAPFLVLL), 313–333 (MMAGHSSVKILSGFAWTMLCM), and 339–359 (FIGDLGPLFIVLALTGLELGV).

The protein belongs to the ATPase A chain family. In terms of assembly, F-type ATPases have 2 components, CF(1) - the catalytic core - and CF(0) - the membrane proton channel. CF(1) has five subunits: alpha(3), beta(3), gamma(1), delta(1), epsilon(1). CF(0) has three main subunits: a, b and c.

Its subcellular location is the mitochondrion inner membrane. Functionally, mitochondrial membrane ATP synthase (F(1)F(0) ATP synthase or Complex V) produces ATP from ADP in the presence of a proton gradient across the membrane which is generated by electron transport complexes of the respiratory chain. F-type ATPases consist of two structural domains, F(1) - containing the extramembraneous catalytic core and F(0) - containing the membrane proton channel, linked together by a central stalk and a peripheral stalk. During catalysis, ATP synthesis in the catalytic domain of F(1) is coupled via a rotary mechanism of the central stalk subunits to proton translocation. Key component of the proton channel; it may play a direct role in the translocation of protons across the membrane. The sequence is that of ATP synthase subunit a (ATP6) from Nicotiana tabacum (Common tobacco).